Reading from the N-terminus, the 30-residue chain is Thermophilic aminopeptidase 1 alpha chain (30 aa).

Belongs to the peptidase M42 family. As to quaternary structure, 12 chains of two different but homologous types, alpha and beta, which can combine in various ratios. It depends on a divalent metal cation as a cofactor.

Its function is as follows. Metalloenzyme of broad specificity, releasing all N-terminal amino acids. In Geobacillus stearothermophilus (Bacillus stearothermophilus), this protein is Thermophilic aminopeptidase 1 alpha chain.